A 177-amino-acid chain; its full sequence is Large ribosomal subunit protein uL5 (177 aa).

It belongs to the universal ribosomal protein uL5 family. As to quaternary structure, part of the 50S ribosomal subunit; part of the 5S rRNA/L5/L18/L25 subcomplex. Contacts the 5S rRNA and the P site tRNA. Forms a bridge to the 30S subunit in the 70S ribosome.

This is one of the proteins that bind and probably mediate the attachment of the 5S RNA into the large ribosomal subunit, where it forms part of the central protuberance. In the 70S ribosome it contacts protein S13 of the 30S subunit (bridge B1b), connecting the 2 subunits; this bridge is implicated in subunit movement. Contacts the P site tRNA; the 5S rRNA and some of its associated proteins might help stabilize positioning of ribosome-bound tRNAs. The chain is Large ribosomal subunit protein uL5 from Ehrlichia ruminantium (strain Welgevonden).